The primary structure comprises 59 residues: MAKVKITLVKSLIGRKKDQIATVNALGLKKIGNIVEHEETPQISGMIKKVSYLLKVEEA.

Belongs to the universal ribosomal protein uL30 family. Part of the 50S ribosomal subunit.

The chain is Large ribosomal subunit protein uL30 from Clostridium botulinum (strain ATCC 19397 / Type A).